Consider the following 388-residue polypeptide: MNLHEYQGKQLFAEYGLPVSKGYAVDTPEAAAEACDKIGGTEWVVKAQVHAGGRGKAGGVKLVRSKEDAAAFAQQWLGKRLVTYQTDANGQPVTKILVESCTDIAKELYLGAVVDRSSRRIVFMASTEGGVDIEKIAHDTPEKILKATIDPLVGAQPFQGRDLAFQLGLEGKQVTQFAKIFTGLAKLFQDHDLALLEVNPLVIKADGDLHCLDAKINIDANAMYRQPKLKGFHDPSQDDPREAHAAKFELNYVALEGNIGCMVNGAGLAMGTMDIVNLHGGKPANFLDVGGGATKERVTEAFKIILSDANVAAVLVNIFGGIVRCDMIAEGIIGAVKEVGVKIPVVVRLEGNNAELGAKVLAESGLNIIAATSLTDAAQQVVKAAEGK.

Positions 9-244 (KQLFAEYGLP…PSQDDPREAH (236 aa)) constitute an ATP-grasp domain. ATP-binding positions include Lys46, 53–55 (GRG), Glu99, Thr102, and Glu107. Mg(2+)-binding residues include Asn199 and Asp213. Residues Asn264 and 321–323 (GIV) contribute to the substrate site.

Belongs to the succinate/malate CoA ligase beta subunit family. As to quaternary structure, heterotetramer of two alpha and two beta subunits. Mg(2+) is required as a cofactor.

The enzyme catalyses succinate + ATP + CoA = succinyl-CoA + ADP + phosphate. The catalysed reaction is GTP + succinate + CoA = succinyl-CoA + GDP + phosphate. The protein operates within carbohydrate metabolism; tricarboxylic acid cycle; succinate from succinyl-CoA (ligase route): step 1/1. Succinyl-CoA synthetase functions in the citric acid cycle (TCA), coupling the hydrolysis of succinyl-CoA to the synthesis of either ATP or GTP and thus represents the only step of substrate-level phosphorylation in the TCA. The beta subunit provides nucleotide specificity of the enzyme and binds the substrate succinate, while the binding sites for coenzyme A and phosphate are found in the alpha subunit. This chain is Succinate--CoA ligase [ADP-forming] subunit beta, found in Pseudomonas syringae pv. syringae (strain B728a).